Here is a 488-residue protein sequence, read N- to C-terminus: GlcNAc-binding protein A (488 aa).

An N-terminal signal peptide occupies residues 1–24; sequence MIMIITKKTLLPVTLALFSSGVMA. A Chitin-binding type-4 domain is found at 25–202; sequence HGYVSSVEGG…SFYNVIDVMF (178 aa). The region spanning 439–480 is the Chitin-binding type-3 domain; it reads AGSKVLATDGRIYECKPFPYSGYCIQWSPSATQFEPGVGSDW.

This sequence belongs to the GbpA family.

Its subcellular location is the secreted. Functionally, probably interacts with GlcNAc residues. May promote attachment to both epithelial cell surfaces and chitin. This is GlcNAc-binding protein A from Photobacterium profundum (strain SS9).